Consider the following 65-residue polypeptide: MNINDIRGLSDTEIKKKLEDAHKELFELRLKLSTRQLVNHRELPRVKNDIARILTVMRERELQIR.

It belongs to the universal ribosomal protein uL29 family.

This Dehalococcoides mccartyi (strain ATCC BAA-2266 / KCTC 15142 / 195) (Dehalococcoides ethenogenes (strain 195)) protein is Large ribosomal subunit protein uL29.